The chain runs to 206 residues: Transmembrane 4 L6 family member 19 (206 aa).

Topologically, residues 1 to 16 (MLSFSRVVNCSRTCSR) are cytoplasmic. The helical transmembrane segment at 17-37 (FLGLSLGTASLCAAGANIALL) threads the bilayer. Residues 38-54 (FPNWDVTYLMRGLIGKH) lie on the Extracellular side of the membrane. The chain crosses the membrane as a helical span at residues 55–75 (AMLGSGLWGGGLMVLLAATLI). At 76–89 (SMTGSFSKSAPCLQ) the chain is on the cytoplasmic side. The helical transmembrane segment at 90 to 110 (VLIALLSSGLALLGAVICFVT) threads the bilayer. Residues 111–171 (SGVALKDGPF…PSKAVVWHVA (61 aa)) are Extracellular-facing. Residue asparagine 129 is glycosylated (N-linked (GlcNAc...) asparagine). A helical transmembrane segment spans residues 172 to 192 (FFSILLCISLLQLLLVAIHLV). Residues 182–192 (LQLLLVAIHLV) form an important for homodimerization region. Residues 193–206 (NSILGLFCSFCEKH) are Cytoplasmic-facing.

Belongs to the L6 tetraspanin family. As to quaternary structure, may form homodimers and homooligomers. Interacts with integrins ITGAV and ITGB3. Interacts with components of members of the V0 complex of vacuolar(H+)-ATPase (V-ATPase), including ATP6V0B and ATP6V0D2; this interaction inhibits V1-V0 complex assembly. In terms of tissue distribution, predominantly expressed in osteoclasts (at protein level). Also expressed in white adipose tissue, as well as in bone marrow-derived macrophages.

It localises to the lysosome membrane. The protein resides in the cytoplasm. Its subcellular location is the cytoskeleton. The protein localises to the cell projection. It is found in the filopodium. In terms of biological role, negatively regulates vacuolar (H+)-ATPase (V-ATPase) activity by interacting with members of V-ATPase V0 complex and hence inhibiting V1-V0 assembly. Required for multinucleation during osteoclast differentiation. This chain is Transmembrane 4 L6 family member 19 (Tm4sf19), found in Mus musculus (Mouse).